The sequence spans 278 residues: MSGEKDRADTGLYCVFGNPVSHSRSPEIHHAFAAQHSDPVQYEKREAPLDDFAGAVQAFREAGGLGANVTVPFKEQAFALCDAITERADQAGAVNTLWWDGDQLHGDNTDGAGLVKDIRNNQGWTIRKKRVLILGAGGAVRGVLGPILAQEPTLLRIANRTKEKAEALAGNVMKGEGPPVLGGGLDNLMGQFDLVINAISAGLHGEMPALPDGLLAEGAVAYDMVYGSEPTPFMRWAEQQGAAATADGLGMLVEQAAEAFEIWRGWRPNTAPVMASLR.

Residues 23–25 (SRS) and threonine 70 each bind shikimate. Residue lysine 74 is the Proton acceptor of the active site. Glutamate 86 contributes to the NADP(+) binding site. Shikimate-binding residues include asparagine 95 and aspartate 110. NADP(+)-binding positions include 135–139 (GAGGA), 159–164 (NRTKEK), and methionine 224. Tyrosine 226 lines the shikimate pocket. Glycine 248 is a binding site for NADP(+).

Belongs to the shikimate dehydrogenase family. In terms of assembly, homodimer.

It carries out the reaction shikimate + NADP(+) = 3-dehydroshikimate + NADPH + H(+). Its pathway is metabolic intermediate biosynthesis; chorismate biosynthesis; chorismate from D-erythrose 4-phosphate and phosphoenolpyruvate: step 4/7. Involved in the biosynthesis of the chorismate, which leads to the biosynthesis of aromatic amino acids. Catalyzes the reversible NADPH linked reduction of 3-dehydroshikimate (DHSA) to yield shikimate (SA). In Alcanivorax borkumensis (strain ATCC 700651 / DSM 11573 / NCIMB 13689 / SK2), this protein is Shikimate dehydrogenase (NADP(+)).